Consider the following 479-residue polypeptide: Isoprimeverose transporter (479 aa).

11 helical membrane-spanning segments follow: residues 54–74 (MFFY…LFLV), 102–122 (PYWL…FTVP), 131–151 (VWAY…NIPI), 174–194 (FMGT…VAYF), 205–225 (WFMV…IVFA), 253–273 (WPWV…QTRS), 289–309 (LASF…ITPW), 321–341 (LMGM…SKAL), 348–368 (VGTI…AVML), 397–417 (FGMG…GYVA), and 431–451 (MNYV…LLFY).

Belongs to the sodium:galactoside symporter (TC 2.A.2) family.

Its subcellular location is the cell membrane. In terms of biological role, involved in the metabolism of isoprimeverose. Transports isoprimeverose into the cell. Transport is driven by the proton motive force generated by malolactic fermentation. Cannot transport D-xylose. The protein is Isoprimeverose transporter of Lactiplantibacillus pentosus (Lactobacillus pentosus).